Consider the following 277-residue polypeptide: NADPH-dependent 7-cyano-7-deazaguanine reductase (277 aa).

83 to 85 (VES) provides a ligand contact to substrate. 85–86 (SK) is an NADPH binding site. The active-site Thioimide intermediate is the cysteine 184. Catalysis depends on aspartate 191, which acts as the Proton donor. 223 to 224 (HE) is a substrate binding site. 252–253 (RG) provides a ligand contact to NADPH.

This sequence belongs to the GTP cyclohydrolase I family. QueF type 2 subfamily. In terms of assembly, homodimer.

It is found in the cytoplasm. It carries out the reaction 7-aminomethyl-7-carbaguanine + 2 NADP(+) = 7-cyano-7-deazaguanine + 2 NADPH + 3 H(+). Its pathway is tRNA modification; tRNA-queuosine biosynthesis. Its function is as follows. Catalyzes the NADPH-dependent reduction of 7-cyano-7-deazaguanine (preQ0) to 7-aminomethyl-7-deazaguanine (preQ1). In Cupriavidus metallidurans (strain ATCC 43123 / DSM 2839 / NBRC 102507 / CH34) (Ralstonia metallidurans), this protein is NADPH-dependent 7-cyano-7-deazaguanine reductase.